The following is a 432-amino-acid chain: Pachytene checkpoint protein 2 homolog (432 aa).

An ATP-binding site is contributed by 179–186; that stretch reads GPPGTGKT.

The protein belongs to the AAA ATPase family. PCH2 subfamily.

In terms of biological role, plays a key role in chromosome recombination and chromosome structure development during meiosis. Required at early steps in meiotic recombination that leads to non-crossovers pathways. Also needed for efficient completion of homologous synapsis by influencing crossover distribution along the chromosomes affecting both crossovers and non-crossovers pathways. This is Pachytene checkpoint protein 2 homolog (TRIP13) from Gallus gallus (Chicken).